The following is a 1368-amino-acid chain: DNA-directed RNA polymerase subunit beta (1368 aa).

It belongs to the RNA polymerase beta chain family. In terms of assembly, the RNAP catalytic core consists of 2 alpha, 1 beta, 1 beta' and 1 omega subunit. When a sigma factor is associated with the core the holoenzyme is formed, which can initiate transcription.

It carries out the reaction RNA(n) + a ribonucleoside 5'-triphosphate = RNA(n+1) + diphosphate. In terms of biological role, DNA-dependent RNA polymerase catalyzes the transcription of DNA into RNA using the four ribonucleoside triphosphates as substrates. In Cupriavidus necator (strain ATCC 17699 / DSM 428 / KCTC 22496 / NCIMB 10442 / H16 / Stanier 337) (Ralstonia eutropha), this protein is DNA-directed RNA polymerase subunit beta.